The chain runs to 250 residues: N-acetylmuramoyl-L-alanine amidase CwlH (250 aa).

Residues 1–44 form the signal peptide; the sequence is MVTIKKDFIPVSNDNRPGYAMAPAYITVHNTANTAKGADAKMHA. The N-acetylmuramoyl-L-alanine amidase domain maps to 45-141; it reads KFVKNPNTSE…KKWSGKECPR (97 aa).

It belongs to the N-acetylmuramoyl-L-alanine amidase 2 family.

It is found in the secreted. The enzyme catalyses Hydrolyzes the link between N-acetylmuramoyl residues and L-amino acid residues in certain cell-wall glycopeptides.. Functionally, autolysins are involved in some important biological processes such as cell separation, cell-wall turnover, competence for genetic transformation, formation of the flagella and sporulation. Could play a role in mother cell lysis with CwlC. This chain is N-acetylmuramoyl-L-alanine amidase CwlH (cwlH), found in Bacillus subtilis (strain 168).